A 157-amino-acid polypeptide reads, in one-letter code: Crossover junction endodeoxyribonuclease RuvC (157 aa).

Residues D7, E67, and D140 contribute to the active site. Mg(2+)-binding residues include D7, E67, and D140.

The protein belongs to the RuvC family. Homodimer which binds Holliday junction (HJ) DNA. The HJ becomes 2-fold symmetrical on binding to RuvC with unstacked arms; it has a different conformation from HJ DNA in complex with RuvA. In the full resolvosome a probable DNA-RuvA(4)-RuvB(12)-RuvC(2) complex forms which resolves the HJ. Mg(2+) serves as cofactor.

The protein localises to the cytoplasm. It catalyses the reaction Endonucleolytic cleavage at a junction such as a reciprocal single-stranded crossover between two homologous DNA duplexes (Holliday junction).. In terms of biological role, the RuvA-RuvB-RuvC complex processes Holliday junction (HJ) DNA during genetic recombination and DNA repair. Endonuclease that resolves HJ intermediates. Cleaves cruciform DNA by making single-stranded nicks across the HJ at symmetrical positions within the homologous arms, yielding a 5'-phosphate and a 3'-hydroxyl group; requires a central core of homology in the junction. The consensus cleavage sequence is 5'-(A/T)TT(C/G)-3'. Cleavage occurs on the 3'-side of the TT dinucleotide at the point of strand exchange. HJ branch migration catalyzed by RuvA-RuvB allows RuvC to scan DNA until it finds its consensus sequence, where it cleaves and resolves the cruciform DNA. This chain is Crossover junction endodeoxyribonuclease RuvC, found in Rickettsia massiliae (strain Mtu5).